A 434-amino-acid chain; its full sequence is 3-phosphoshikimate 1-carboxyvinyltransferase (434 aa).

Lys22, Ser23, and Arg27 together coordinate 3-phosphoshikimate. Lys22 contacts phosphoenolpyruvate. Phosphoenolpyruvate is bound by residues Gly94 and Arg122. Positions 167, 169, 314, and 341 each coordinate 3-phosphoshikimate. Phosphoenolpyruvate is bound at residue Gln169. The Proton acceptor role is filled by Asp314. Arg345 and Arg391 together coordinate phosphoenolpyruvate.

This sequence belongs to the EPSP synthase family. As to quaternary structure, monomer.

It localises to the cytoplasm. It catalyses the reaction 3-phosphoshikimate + phosphoenolpyruvate = 5-O-(1-carboxyvinyl)-3-phosphoshikimate + phosphate. The protein operates within metabolic intermediate biosynthesis; chorismate biosynthesis; chorismate from D-erythrose 4-phosphate and phosphoenolpyruvate: step 6/7. Catalyzes the transfer of the enolpyruvyl moiety of phosphoenolpyruvate (PEP) to the 5-hydroxyl of shikimate-3-phosphate (S3P) to produce enolpyruvyl shikimate-3-phosphate and inorganic phosphate. The protein is 3-phosphoshikimate 1-carboxyvinyltransferase of Leuconostoc mesenteroides subsp. mesenteroides (strain ATCC 8293 / DSM 20343 / BCRC 11652 / CCM 1803 / JCM 6124 / NCDO 523 / NBRC 100496 / NCIMB 8023 / NCTC 12954 / NRRL B-1118 / 37Y).